The primary structure comprises 391 residues: Formate-dependent phosphoribosylglycinamide formyltransferase (391 aa).

N(1)-(5-phospho-beta-D-ribosyl)glycinamide contacts are provided by residues 18–19 and E78; that span reads EL. ATP-binding positions include R110, K151, 156 to 161, 191 to 194, and E199; these read SSGKGQ and EEFI. Residues 115–305 enclose the ATP-grasp domain; sequence ELVSRDLKIK…EFELHLRAFL (191 aa). Positions 264 and 276 each coordinate Mg(2+). N(1)-(5-phospho-beta-D-ribosyl)glycinamide-binding positions include D283, K353, and 360-361; that span reads RR.

It belongs to the PurK/PurT family. In terms of assembly, homodimer.

The catalysed reaction is N(1)-(5-phospho-beta-D-ribosyl)glycinamide + formate + ATP = N(2)-formyl-N(1)-(5-phospho-beta-D-ribosyl)glycinamide + ADP + phosphate + H(+). It functions in the pathway purine metabolism; IMP biosynthesis via de novo pathway; N(2)-formyl-N(1)-(5-phospho-D-ribosyl)glycinamide from N(1)-(5-phospho-D-ribosyl)glycinamide (formate route): step 1/1. Involved in the de novo purine biosynthesis. Catalyzes the transfer of formate to 5-phospho-ribosyl-glycinamide (GAR), producing 5-phospho-ribosyl-N-formylglycinamide (FGAR). Formate is provided by PurU via hydrolysis of 10-formyl-tetrahydrofolate. This is Formate-dependent phosphoribosylglycinamide formyltransferase from Prochlorococcus marinus (strain MIT 9312).